A 37-amino-acid polypeptide reads, in one-letter code: Large ribosomal subunit protein bL36 (37 aa).

The protein belongs to the bacterial ribosomal protein bL36 family.

In Idiomarina loihiensis (strain ATCC BAA-735 / DSM 15497 / L2-TR), this protein is Large ribosomal subunit protein bL36.